A 351-amino-acid chain; its full sequence is Calcium homeostasis modulator 1 (351 aa).

Over 1 to 20 (MDKFRMMFQFLQSNQESFMN) the chain is Cytoplasmic. The segment at 9–36 (QFLQSNQESFMNGICGIMALASAQMYSS) is central pore. Residues 21–36 (GICGIMALASAQMYSS) form a helical membrane-spanning segment. Over 37 to 48 (FEFSCPCMPEYN) the chain is Extracellular. 2 disulfide bridges follow: Cys-41/Cys-126 and Cys-43/Cys-160. Residues 49 to 71 (YTYGIGLLIIPPIWFFLLGFVLN) form a helical membrane-spanning segment. A phospholipid-binding region spans residues 62–69 (WFFLLGFV). Topologically, residues 72 to 98 (NNVSVLAEEWKRPTGRRTKDPSVLRYM) are cytoplasmic. The helical transmembrane segment at 99–124 (LCSITQRSLIAPAVWVSVTLMDGKSF) threads the bilayer. A lipid anchor (S-palmitoyl cysteine) is attached at Cys-100. Residues 104-116 (QRSLIAPAVWVSV) are phospholipid-binding. At 125-177 (LCAFSINLDIEKFGNASLVIGMTETEKLKFLARIPCKDLFEDNEVRVAATRYI) the chain is on the extracellular side. N-linked (GlcNAc...) asparagine glycosylation is present at Asn-139. A helical transmembrane segment spans residues 178–203 (KCISQACGWMFLLMMTFTAFLIRAIR). The tract at residues 189–199 (LLMMTFTAFLI) is phospholipid-binding. The Cytoplasmic portion of the chain corresponds to 204–351 (PCFTQAAFLK…KEWAVYYSKV (148 aa)). A lipid anchor (S-palmitoyl cysteine) is attached at Cys-205. The tract at residues 259–281 (HRHQSKDTSDAEEEEKQRSDEDK) is disordered. A compositionally biased stretch (basic and acidic residues) spans 263–281 (SKDTSDAEEEEKQRSDEDK).

The protein belongs to the CALHM family. In terms of assembly, oligomerizes to form hexamers and octamers. Does not form gap junctions. Associates with CALHM3 as a pore-forming subunit in a hetero-hexameric channel complex. In terms of processing, N-glycosylated. Post-translationally, palmitoylated.

It localises to the cell membrane. The protein resides in the endoplasmic reticulum membrane. The protein localises to the basolateral cell membrane. The catalysed reaction is ATP(in) = ATP(out). It catalyses the reaction Ca(2+)(in) = Ca(2+)(out). The enzyme catalyses Mg(2+)(in) = Mg(2+)(out). It carries out the reaction Na(+)(in) = Na(+)(out). The catalysed reaction is K(+)(in) = K(+)(out). It catalyses the reaction Li(+)(in) = Li(+)(out). The enzyme catalyses Rb(+)(in) = Rb(+)(out). It carries out the reaction Cs(+)(in) = Cs(+)(out). The catalysed reaction is chloride(in) = chloride(out). Activated in response to membrane depolarization and low extracellular Ca(2+) concentration. Inhibited by ruthenium red. In terms of biological role, pore-forming subunit of a voltage-gated ion channel. Has poor ion selectivity and forms a wide pore that mediates permeation of small ions including Ca(2+), Na(+), K(+) and Cl(-), as well as larger ions such as ATP(4-). This is Calcium homeostasis modulator 1 from Oryzias latipes (Japanese rice fish).